Here is a 478-residue protein sequence, read N- to C-terminus: Cytochrome P450 family 716 subfamily AD polypeptide 4 (478 aa).

Residues 1–21 traverse the membrane as a helical segment; the sequence is MELFLPSVLLILTVFCFYYLF. Heme is bound at residue C425.

This sequence belongs to the cytochrome P450 family. Heme is required as a cofactor. Mainly expressed in petioles and, to a lower extent, in roots.

Its subcellular location is the membrane. The enzyme catalyses (1S,3bR,4R,5aR,9aR,9bR,11aS)-1-[(4R)-5-[(2S)-3,3-dimethyloxiran-2-yl]-1,4-dihydroxybutan-2-yl]-3b,6,6,9a,11a-pentamethyl-7-oxo-1H,2H,3bH,4H,5H,5aH,6H,7H,9aH,9bH,10H,11H,11aH-cyclopenta[a]phenanthren-4-yl acetate + reduced [NADPH--hemoprotein reductase] + O2 = (1S,3bR,4R,5aR,9aR,9bR,11aS)-1-(1-hydroxy-4-oxobutan-2-yl)-3b,6,6,9a,11a-pentamethyl-7-oxo-1H,2H,3bH,4H,5H,5aH,6H,7H,9aH,9bH,10H,11H,11aH-cyclopenta[a]phenanthren-4-yl acetate + 2-methylpropanoate + oxidized [NADPH--hemoprotein reductase] + H2O + 2 H(+). The protein operates within secondary metabolite biosynthesis; terpenoid biosynthesis. Monooxygenase involved in the biosynthesis of limonoids triterpene natural products such as azadirachtin, an antifeedant widely used as bioinsecticide, and possessing many medicinal applications including anti-tumoral, anti-malarial, anti-rheumatic, antibacterial, anti-inflammatory, anti-pyretic and diuretic effects. Catalyzes the formation of (1S,3bR,4R,5aR,9aR,9bR,11aS)-1-(1-hydroxy-4-oxobutan-2-yl)-3b,6,6,9a,11a-pentamethyl-7-oxo-1H,2H,3bH,4H,5H,5aH,6H,7H,9aH,9bH,10H,11H,11aH-cyclopenta[a]phenanthren-4-yl acetate. This chain is Cytochrome P450 family 716 subfamily AD polypeptide 4, found in Melia azedarach (Chinaberry tree).